A 79-amino-acid chain; its full sequence is Sec-independent protein translocase protein TatA (79 aa).

Residues 1–21 (MGGFTSIWHWVIVLLVIVLLF) form a helical membrane-spanning segment. A disordered region spans residues 48 to 79 (EEEAKNEPKTLDAQATQTKVHESSEIKSKQES). The segment covering 66-79 (KVHESSEIKSKQES) has biased composition (basic and acidic residues).

It belongs to the TatA/E family. In terms of assembly, the Tat system comprises two distinct complexes: a TatABC complex, containing multiple copies of TatA, TatB and TatC subunits, and a separate TatA complex, containing only TatA subunits. Substrates initially bind to the TatABC complex, which probably triggers association of the separate TatA complex to form the active translocon.

The protein resides in the cell inner membrane. Part of the twin-arginine translocation (Tat) system that transports large folded proteins containing a characteristic twin-arginine motif in their signal peptide across membranes. TatA could form the protein-conducting channel of the Tat system. The polypeptide is Sec-independent protein translocase protein TatA (Helicobacter pylori (strain ATCC 700392 / 26695) (Campylobacter pylori)).